Reading from the N-terminus, the 140-residue chain is NADPH-dependent 7-cyano-7-deazaguanine reductase (140 aa).

The active-site Thioimide intermediate is Cys-51. Residue Asp-58 is the Proton donor of the active site. Substrate contacts are provided by residues 73–75 (LES) and 92–93 (HE).

The protein belongs to the GTP cyclohydrolase I family. QueF type 1 subfamily.

It is found in the cytoplasm. It catalyses the reaction 7-aminomethyl-7-carbaguanine + 2 NADP(+) = 7-cyano-7-deazaguanine + 2 NADPH + 3 H(+). It participates in tRNA modification; tRNA-queuosine biosynthesis. In terms of biological role, catalyzes the NADPH-dependent reduction of 7-cyano-7-deazaguanine (preQ0) to 7-aminomethyl-7-deazaguanine (preQ1). The polypeptide is NADPH-dependent 7-cyano-7-deazaguanine reductase (Syntrophus aciditrophicus (strain SB)).